Here is a 329-residue protein sequence, read N- to C-terminus: MKTPITVTVTGAAGQIAYSLLFRIASGSMLGPDQPINLRLLEIPPAMNALEGVVMELRDAAFPLVNEIVPTSDPDEAFAGANWCLLVGSVPRKAGMERKDLLDINGKVFIGQGQAIARSAAKDVRVLVVGNPCNTNALIAMHNASGVPSDRFFAMTRLDENRAKSQLAEKAGVHVTEVTNMAIWGNHSSTQYPDFTNARIGGKPVTEVIKDTEWLKGDFITTVQQRGAAIIKARGASSAASAASAAVDTVRSLATQTPEGDWYSVAVCSDGSYGIEKGLICSFPVRTTKDGGWEIVQGLPVDAFSREKIDATVNELKEERDAVSSLLKH.

Glycine 11 to alanine 17 provides a ligand contact to NAD(+). Arginine 92 and arginine 98 together coordinate substrate. Residues asparagine 105, glutamine 112, and valine 129–asparagine 131 contribute to the NAD(+) site. Positions 131 and 162 each coordinate substrate. Residue histidine 187 is the Proton acceptor of the active site.

Belongs to the LDH/MDH superfamily. MDH type 2 family.

It carries out the reaction (S)-malate + NAD(+) = oxaloacetate + NADH + H(+). In terms of biological role, catalyzes the reversible oxidation of malate to oxaloacetate. The protein is Malate dehydrogenase of Akkermansia muciniphila (strain ATCC BAA-835 / DSM 22959 / JCM 33894 / BCRC 81048 / CCUG 64013 / CIP 107961 / Muc).